A 508-amino-acid chain; its full sequence is MGLPWYRVHTVVLNDPGRLISVHLMHTALVSGWAGSMALYELAVFDPSDPVLDPMWRQGMFVIPFMTRIGVSKSWGGWIITGDTSTDAGIWSYEGVAAAHIILSGLLFLAAIWHWVYWDLDLFRDDRTGKPSLDLPKIFGIHLFLSGVLCFSFGAFHVTGLFGPGIWISDPYGLTGKVEPVDPAWGAEGFDPFIPGGIASHHIAAGVLGILAGLFHLSVRPPQRLYKALRMGNVETVLSSSIAAVFFAAFVVSGTMWYGSAATPIELFGPTRYQWDQGYFQQEIERRIRLGEAENLSLSQVWSKIPEKLAFYDYIGNNPAKGGLFRAGAMDNGDGIAVGWLGHALFKDREGRELFVRRMPTFFETFPVVLVDGEGVVRADVPFRRAESKYSVEQVGVTVDFFGGELDGASFSDPATVKKYARRAQLGEIFEFDRATLKSDGVFRSSPRGWFTFGHTTFALIFFFGHIWHGARTLFRDVFAGIDPDLDAQVEFGAFQKLGDPSTKKQAV.

The next 6 helical transmembrane spans lie at 21-36 (SVHLMHTALVSGWAGS), 101-115 (IILSGLLFLAAIWHW), 140-156 (GIHLFLSGVLCFSFGAF), 203-218 (IAAGVLGILAGLFHLS), 237-252 (VLSSSIAAVFFAAFVV), and 457-472 (TFALIFFFGHIWHGAR).

It belongs to the PsbB/PsbC family. PsbB subfamily. As to quaternary structure, PSII is composed of 1 copy each of membrane proteins PsbA, PsbB, PsbC, PsbD, PsbE, PsbF, PsbH, PsbI, PsbJ, PsbK, PsbL, PsbM, PsbT, PsbX, PsbY, PsbZ, Psb30/Ycf12, at least 3 peripheral proteins of the oxygen-evolving complex and a large number of cofactors. It forms dimeric complexes. It depends on Binds multiple chlorophylls. PSII binds additional chlorophylls, carotenoids and specific lipids. as a cofactor.

Its subcellular location is the plastid. The protein resides in the chloroplast thylakoid membrane. Its function is as follows. One of the components of the core complex of photosystem II (PSII). It binds chlorophyll and helps catalyze the primary light-induced photochemical processes of PSII. PSII is a light-driven water:plastoquinone oxidoreductase, using light energy to abstract electrons from H(2)O, generating O(2) and a proton gradient subsequently used for ATP formation. The polypeptide is Photosystem II CP47 reaction center protein (Adiantum capillus-veneris (Maidenhair fern)).